The following is a 140-amino-acid chain: FLYWCH family member 2 (140 aa).

Disordered regions lie at residues 1-39 (MPLP…PREF) and 83-140 (THPE…GKSL). Position 21 is a phosphoserine (Ser-21). The span at 98-114 (PEQKRSRQDPGADRTED) shows a compositional bias: basic and acidic residues. Residues 118-127 (AAGPPEAAGE) are compositionally biased toward low complexity.

In Pongo abelii (Sumatran orangutan), this protein is FLYWCH family member 2 (FLYWCH2).